Here is a 480-residue protein sequence, read N- to C-terminus: Glycogen synthase (480 aa).

Residue K15 coordinates ADP-alpha-D-glucose.

This sequence belongs to the glycosyltransferase 1 family. Bacterial/plant glycogen synthase subfamily.

It catalyses the reaction [(1-&gt;4)-alpha-D-glucosyl](n) + ADP-alpha-D-glucose = [(1-&gt;4)-alpha-D-glucosyl](n+1) + ADP + H(+). The protein operates within glycan biosynthesis; glycogen biosynthesis. Its function is as follows. Synthesizes alpha-1,4-glucan chains using ADP-glucose. The sequence is that of Glycogen synthase from Clostridioides difficile (strain 630) (Peptoclostridium difficile).